Consider the following 180-residue polypeptide: uncharacterized protein (180 aa).

The signal sequence occupies residues 1-24 (MKKKTIFQCVILFFSILNIHVGMA).

Its function is as follows. Part of the elfADCG-ycbUVF fimbrial operon, which promotes adhesion of bacteria to different abiotic surfaces. This is an uncharacterized protein from Escherichia coli (strain K12).